The primary structure comprises 341 residues: Phosphate acyltransferase (341 aa).

This sequence belongs to the PlsX family. As to quaternary structure, homodimer. Probably interacts with PlsY.

The protein localises to the cytoplasm. It carries out the reaction a fatty acyl-[ACP] + phosphate = an acyl phosphate + holo-[ACP]. It functions in the pathway lipid metabolism; phospholipid metabolism. Functionally, catalyzes the reversible formation of acyl-phosphate (acyl-PO(4)) from acyl-[acyl-carrier-protein] (acyl-ACP). This enzyme utilizes acyl-ACP as fatty acyl donor, but not acyl-CoA. The sequence is that of Phosphate acyltransferase from Idiomarina loihiensis (strain ATCC BAA-735 / DSM 15497 / L2-TR).